The following is a 314-amino-acid chain: tRNA pseudouridine synthase B (314 aa).

H43 serves as a coordination point for substrate. Catalysis depends on D48, which acts as the Nucleophile. Y76, Y179, and L200 together coordinate substrate.

This sequence belongs to the pseudouridine synthase TruB family. Type 1 subfamily.

The enzyme catalyses uridine(55) in tRNA = pseudouridine(55) in tRNA. Responsible for synthesis of pseudouridine from uracil-55 in the psi GC loop of transfer RNAs. The chain is tRNA pseudouridine synthase B from Shigella flexneri.